The sequence spans 293 residues: Oxidoreductase R2 (293 aa).

The protein belongs to the asaB hydroxylase/desaturase family.

The protein operates within secondary metabolite biosynthesis. Its function is as follows. Oxidoreductase; part of the gene cluster that mediates the biosynthesis of squalestatin S1 (SQS1, also known as zaragozic acid A), a heavily oxidized fungal polyketide that offers potent cholesterol lowering activity by targeting squalene synthase (SS). SQS1 is composed of a 2,8-dioxobicyclic[3.2.1]octane-3,4,5-tricarboxyclic acid core that is connected to two lipophilic polyketide arms. These initial steps feature the priming of an unusual benzoic acid starter unit onto the highly reducing polyketide synthase pks2, followed by oxaloacetate extension and product release to generate a tricarboxylic acid containing product. The phenylalanine ammonia lyase (PAL) M7 and the acyl-CoA ligase M9 are involved in transforming phenylalanine into benzoyl-CoA. The citrate synthase-like protein R3 is involved in connecting the C-alpha-carbons of the hexaketide chain and oxaloacetate to afford the tricarboxylic acid unit. The potential hydrolytic enzymes, M8 and M10, are in close proximity to pks2 and may participate in product release. On the other side, the tetraketide arm is synthesized by a the squalestatin tetraketide synthase pks1 and enzymatically esterified to the core in the last biosynthetic step, by the acetyltransferase M4. The biosynthesis of the tetraketide must involve 3 rounds of chain extension. After the first and second rounds methyl-transfer occurs, and in all rounds of extension the ketoreductase and dehydratase are active. The enoyl reductase and C-MeT of pks1 are not active in the final round of extension. The acetyltransferase M4 appears to have a broad substrate selectivity for its acyl CoA substrate, allowing the in vitro synthesis of novel squalestatins. The biosynthesis of SQS1 requires several oxidative steps likely performed by oxidoreductases M1, R1 and R2. Finally, in support of the identification of the cluster as being responsible for SQS1 production, the cluster contains a gene encoding a putative squalene synthase (SS) R6, suggesting a likely mechanism for self-resistance. This chain is Oxidoreductase R2, found in Phoma sp. (strain ATCC 20986 / MF5453).